A 197-amino-acid chain; its full sequence is Histone chaperone asf1b-B (197 aa).

It belongs to the ASF1 family. Interacts with histone H3 and histone H4.

Its subcellular location is the nucleus. Its function is as follows. Histone chaperone that facilitates histone deposition and histone exchange and removal during nucleosome assembly and disassembly. In Danio rerio (Zebrafish), this protein is Histone chaperone asf1b-B (asf1bb).